Reading from the N-terminus, the 294-residue chain is NAD kinase (294 aa).

D74 acts as the Proton acceptor in catalysis. Residues 74-75 (DG), R79, 149-150 (NE), D179, 190-195 (TGYSMS), and A214 each bind NAD(+).

It belongs to the NAD kinase family. Requires a divalent metal cation as cofactor.

The protein resides in the cytoplasm. The enzyme catalyses NAD(+) + ATP = ADP + NADP(+) + H(+). In terms of biological role, involved in the regulation of the intracellular balance of NAD and NADP, and is a key enzyme in the biosynthesis of NADP. Catalyzes specifically the phosphorylation on 2'-hydroxyl of the adenosine moiety of NAD to yield NADP. The protein is NAD kinase of Flavobacterium psychrophilum (strain ATCC 49511 / DSM 21280 / CIP 103535 / JIP02/86).